Consider the following 181-residue polypeptide: Acireductone dioxygenase (181 aa).

Positions 97, 99, 103, and 141 each coordinate Fe(2+). Residues histidine 97, histidine 99, glutamate 103, and histidine 141 each contribute to the Ni(2+) site.

The protein belongs to the acireductone dioxygenase (ARD) family. As to quaternary structure, monomer. It depends on Fe(2+) as a cofactor. Requires Ni(2+) as cofactor.

The catalysed reaction is 1,2-dihydroxy-5-(methylsulfanyl)pent-1-en-3-one + O2 = 3-(methylsulfanyl)propanoate + CO + formate + 2 H(+). It carries out the reaction 1,2-dihydroxy-5-(methylsulfanyl)pent-1-en-3-one + O2 = 4-methylsulfanyl-2-oxobutanoate + formate + 2 H(+). It participates in amino-acid biosynthesis; L-methionine biosynthesis via salvage pathway; L-methionine from S-methyl-5-thio-alpha-D-ribose 1-phosphate: step 5/6. Its function is as follows. Catalyzes 2 different reactions between oxygen and the acireductone 1,2-dihydroxy-3-keto-5-methylthiopentene (DHK-MTPene) depending upon the metal bound in the active site. Fe-containing acireductone dioxygenase (Fe-ARD) produces formate and 2-keto-4-methylthiobutyrate (KMTB), the alpha-ketoacid precursor of methionine in the methionine recycle pathway. Ni-containing acireductone dioxygenase (Ni-ARD) produces methylthiopropionate, carbon monoxide and formate, and does not lie on the methionine recycle pathway. This is Acireductone dioxygenase from Pseudomonas syringae pv. syringae (strain B728a).